Here is an 833-residue protein sequence, read N- to C-terminus: Leucine--tRNA ligase (833 aa).

A 'HIGH' region motif is present at residues 41 to 52 (PYPSGAGLHVGH). Residues 610-614 (KMSKS) carry the 'KMSKS' region motif. Position 613 (lysine 613) interacts with ATP.

Belongs to the class-I aminoacyl-tRNA synthetase family.

The protein resides in the cytoplasm. The catalysed reaction is tRNA(Leu) + L-leucine + ATP = L-leucyl-tRNA(Leu) + AMP + diphosphate. The protein is Leucine--tRNA ligase of Streptococcus pneumoniae (strain Hungary19A-6).